The following is a 443-amino-acid chain: Phosphoglucosamine mutase (443 aa).

Serine 100 (phosphoserine intermediate) is an active-site residue. Serine 100, aspartate 239, aspartate 241, and aspartate 243 together coordinate Mg(2+). Residue serine 100 is modified to Phosphoserine.

Belongs to the phosphohexose mutase family. Mg(2+) serves as cofactor. In terms of processing, activated by phosphorylation.

The catalysed reaction is alpha-D-glucosamine 1-phosphate = D-glucosamine 6-phosphate. Functionally, catalyzes the conversion of glucosamine-6-phosphate to glucosamine-1-phosphate. The protein is Phosphoglucosamine mutase of Shewanella sediminis (strain HAW-EB3).